We begin with the raw amino-acid sequence, 527 residues long: Peptide chain release factor 3 (527 aa).

Residues A9 to L277 form the tr-type G domain. GTP-binding positions include S18–T25, D86–H90, and N140–D143.

It belongs to the TRAFAC class translation factor GTPase superfamily. Classic translation factor GTPase family. PrfC subfamily.

Its subcellular location is the cytoplasm. In terms of biological role, increases the formation of ribosomal termination complexes and stimulates activities of RF-1 and RF-2. It binds guanine nucleotides and has strong preference for UGA stop codons. It may interact directly with the ribosome. The stimulation of RF-1 and RF-2 is significantly reduced by GTP and GDP, but not by GMP. This chain is Peptide chain release factor 3, found in Pseudomonas syringae pv. syringae (strain B728a).